Consider the following 99-residue polypeptide: NADH dehydrogenase [ubiquinone] 1 alpha subcomplex subunit 2 (99 aa).

Alanine 2 carries the N-acetylalanine modification. Cysteines 24 and 58 form a disulfide. Lysine 64 bears the N6-acetyllysine; alternate mark. At lysine 64 the chain carries N6-succinyllysine; alternate.

Belongs to the complex I NDUFA2 subunit family. As to quaternary structure, complex I is composed of 45 different subunits.

It localises to the mitochondrion inner membrane. Functionally, accessory subunit of the mitochondrial membrane respiratory chain NADH dehydrogenase (Complex I), that is believed not to be involved in catalysis. Complex I functions in the transfer of electrons from NADH to the respiratory chain. The immediate electron acceptor for the enzyme is believed to be ubiquinone. This Homo sapiens (Human) protein is NADH dehydrogenase [ubiquinone] 1 alpha subcomplex subunit 2 (NDUFA2).